The primary structure comprises 101 residues: Small ribosomal subunit protein uS14 (101 aa).

It belongs to the universal ribosomal protein uS14 family. As to quaternary structure, part of the 30S ribosomal subunit. Contacts proteins S3 and S10.

Functionally, binds 16S rRNA, required for the assembly of 30S particles and may also be responsible for determining the conformation of the 16S rRNA at the A site. The polypeptide is Small ribosomal subunit protein uS14 (Polaromonas sp. (strain JS666 / ATCC BAA-500)).